A 195-amino-acid polypeptide reads, in one-letter code: Large ribosomal subunit protein uL5 (195 aa).

It belongs to the universal ribosomal protein uL5 family. As to quaternary structure, part of the 50S ribosomal subunit; part of the 5S rRNA/L5/L18/L25 subcomplex. Contacts the 5S rRNA and the P site tRNA. Forms a bridge to the 30S subunit in the 70S ribosome.

This is one of the proteins that bind and probably mediate the attachment of the 5S RNA into the large ribosomal subunit, where it forms part of the central protuberance. In the 70S ribosome it contacts protein S13 of the 30S subunit (bridge B1b), connecting the 2 subunits; this bridge is implicated in subunit movement. Contacts the P site tRNA; the 5S rRNA and some of its associated proteins might help stabilize positioning of ribosome-bound tRNAs. This chain is Large ribosomal subunit protein uL5, found in Chlorobium phaeobacteroides (strain DSM 266 / SMG 266 / 2430).